We begin with the raw amino-acid sequence, 215 residues long: Histidine biosynthesis bifunctional protein HisIE (215 aa).

The interval Met1 to Ile118 is phosphoribosyl-AMP cyclohydrolase. Positions Ile119 to Glu215 are phosphoribosyl-ATP pyrophosphohydrolase.

This sequence in the N-terminal section; belongs to the PRA-CH family. In the C-terminal section; belongs to the PRA-PH family.

The protein resides in the cytoplasm. It carries out the reaction 1-(5-phospho-beta-D-ribosyl)-ATP + H2O = 1-(5-phospho-beta-D-ribosyl)-5'-AMP + diphosphate + H(+). The enzyme catalyses 1-(5-phospho-beta-D-ribosyl)-5'-AMP + H2O = 1-(5-phospho-beta-D-ribosyl)-5-[(5-phospho-beta-D-ribosylamino)methylideneamino]imidazole-4-carboxamide. Its pathway is amino-acid biosynthesis; L-histidine biosynthesis; L-histidine from 5-phospho-alpha-D-ribose 1-diphosphate: step 2/9. It participates in amino-acid biosynthesis; L-histidine biosynthesis; L-histidine from 5-phospho-alpha-D-ribose 1-diphosphate: step 3/9. This is Histidine biosynthesis bifunctional protein HisIE from Oceanobacillus iheyensis (strain DSM 14371 / CIP 107618 / JCM 11309 / KCTC 3954 / HTE831).